Here is a 504-residue protein sequence, read N- to C-terminus: Cytochrome P450 2D1 (504 aa).

C446 is a binding site for heme.

It belongs to the cytochrome P450 family. Heme serves as cofactor.

It is found in the endoplasmic reticulum membrane. It localises to the microsome membrane. The enzyme catalyses an organic molecule + reduced [NADPH--hemoprotein reductase] + O2 = an alcohol + oxidized [NADPH--hemoprotein reductase] + H2O + H(+). In terms of biological role, cytochromes P450 are a group of heme-thiolate monooxygenases. In liver microsomes, this enzyme is involved in an NADPH-dependent electron transport pathway. It oxidizes a variety of structurally unrelated compounds, including steroids, fatty acids, and xenobiotics. The sequence is that of Cytochrome P450 2D1 (Cyp2d1) from Rattus norvegicus (Rat).